We begin with the raw amino-acid sequence, 435 residues long: ATP-dependent Clp protease ATP-binding subunit ClpX 3 (435 aa).

Residues 1 to 53 (MSSDPPAKTQHCSFCGIEQGRDTPLIAGIEGQICEACVRLAEQVVANWGRKRS) form the ClpX-type ZB domain. Residues Cys-12, Cys-15, Cys-34, and Cys-37 each contribute to the Zn(2+) site. An ATP-binding site is contributed by 125–132 (PTGTGKTL).

This sequence belongs to the ClpX chaperone family. Component of the ClpX-ClpP complex. Forms a hexameric ring that, in the presence of ATP, binds to fourteen ClpP subunits assembled into a disk-like structure with a central cavity, resembling the structure of eukaryotic proteasomes.

Functionally, ATP-dependent specificity component of the Clp protease. It directs the protease to specific substrates. Can perform chaperone functions in the absence of ClpP. The sequence is that of ATP-dependent Clp protease ATP-binding subunit ClpX 3 from Methylococcus capsulatus (strain ATCC 33009 / NCIMB 11132 / Bath).